A 120-amino-acid chain; its full sequence is Large ribosomal subunit protein uL18 (120 aa).

Belongs to the universal ribosomal protein uL18 family. Part of the 50S ribosomal subunit; part of the 5S rRNA/L5/L18/L25 subcomplex. Contacts the 5S and 23S rRNAs.

This is one of the proteins that bind and probably mediate the attachment of the 5S RNA into the large ribosomal subunit, where it forms part of the central protuberance. This is Large ribosomal subunit protein uL18 from Macrococcus caseolyticus (strain JCSC5402) (Macrococcoides caseolyticum).